The chain runs to 235 residues: Small ribosomal subunit protein uS2c (235 aa).

Belongs to the universal ribosomal protein uS2 family.

The protein localises to the plastid. Its subcellular location is the chloroplast. This is Small ribosomal subunit protein uS2c (rps2) from Cryptomeria japonica (Japanese cedar).